A 302-amino-acid chain; its full sequence is Probable histone acetyltransferase Rv0428c (302 aa).

The catalysed reaction is L-lysyl-[histone] + acetyl-CoA = N(6)-acetyl-L-lysyl-[histone] + CoA + H(+). In terms of biological role, shows histone acetyl transferase (HAT) activity with recombinant eukaryotic H3 histone expressed in bacteria as substrate and acetyl-CoA as donor. May be involved in survival under stress conditions. In Mycobacterium tuberculosis (strain ATCC 25618 / H37Rv), this protein is Probable histone acetyltransferase Rv0428c.